The following is a 375-amino-acid chain: Chaperone protein DnaJ (375 aa).

The region spanning 5–70 (DFYETLGVAK…QKRAAYDRYG (66 aa)) is the J domain. Residues 136–214 (GKTAQIRVPT…CHGQGRVTEE (79 aa)) form a CR-type zinc finger. Cysteine 149, cysteine 152, cysteine 166, cysteine 169, cysteine 188, cysteine 191, cysteine 202, and cysteine 205 together coordinate Zn(2+). 4 CXXCXGXG motif repeats span residues 149-156 (CDVCSGSG), 166-173 (CGTCQGTG), 188-195 (CPTCHGRG), and 202-209 (CPKCHGQG).

Belongs to the DnaJ family. In terms of assembly, homodimer. Requires Zn(2+) as cofactor.

The protein resides in the cytoplasm. Participates actively in the response to hyperosmotic and heat shock by preventing the aggregation of stress-denatured proteins and by disaggregating proteins, also in an autonomous, DnaK-independent fashion. Unfolded proteins bind initially to DnaJ; upon interaction with the DnaJ-bound protein, DnaK hydrolyzes its bound ATP, resulting in the formation of a stable complex. GrpE releases ADP from DnaK; ATP binding to DnaK triggers the release of the substrate protein, thus completing the reaction cycle. Several rounds of ATP-dependent interactions between DnaJ, DnaK and GrpE are required for fully efficient folding. Also involved, together with DnaK and GrpE, in the DNA replication of plasmids through activation of initiation proteins. This chain is Chaperone protein DnaJ, found in Rhizobium johnstonii (strain DSM 114642 / LMG 32736 / 3841) (Rhizobium leguminosarum bv. viciae).